The primary structure comprises 399 residues: Dual-specificity RNA methyltransferase RlmN (399 aa).

Residue Glu-122 is the Proton acceptor of the active site. Positions 128 to 371 (ETDRGTLCVS…VRTPRGRDIL (244 aa)) constitute a Radical SAM core domain. A disulfide bridge links Cys-135 with Cys-374. The [4Fe-4S] cluster site is built by Cys-142, Cys-146, and Cys-149. S-adenosyl-L-methionine is bound by residues 200–201 (GE), Ser-232, 254–256 (SLH), and Asn-331. The active-site S-methylcysteine intermediate is Cys-374.

It belongs to the radical SAM superfamily. RlmN family. [4Fe-4S] cluster is required as a cofactor.

The protein resides in the cytoplasm. The enzyme catalyses adenosine(2503) in 23S rRNA + 2 reduced [2Fe-2S]-[ferredoxin] + 2 S-adenosyl-L-methionine = 2-methyladenosine(2503) in 23S rRNA + 5'-deoxyadenosine + L-methionine + 2 oxidized [2Fe-2S]-[ferredoxin] + S-adenosyl-L-homocysteine. The catalysed reaction is adenosine(37) in tRNA + 2 reduced [2Fe-2S]-[ferredoxin] + 2 S-adenosyl-L-methionine = 2-methyladenosine(37) in tRNA + 5'-deoxyadenosine + L-methionine + 2 oxidized [2Fe-2S]-[ferredoxin] + S-adenosyl-L-homocysteine. Specifically methylates position 2 of adenine 2503 in 23S rRNA and position 2 of adenine 37 in tRNAs. m2A2503 modification seems to play a crucial role in the proofreading step occurring at the peptidyl transferase center and thus would serve to optimize ribosomal fidelity. In Rhodopseudomonas palustris (strain BisB18), this protein is Dual-specificity RNA methyltransferase RlmN.